The primary structure comprises 404 residues: Arginine biosynthesis bifunctional protein ArgJ (404 aa).

Substrate is bound by residues T156, K182, T193, E277, N399, and S404. T193 acts as the Nucleophile in catalysis.

This sequence belongs to the ArgJ family. As to quaternary structure, heterotetramer of two alpha and two beta chains.

The protein resides in the cytoplasm. It carries out the reaction N(2)-acetyl-L-ornithine + L-glutamate = N-acetyl-L-glutamate + L-ornithine. The catalysed reaction is L-glutamate + acetyl-CoA = N-acetyl-L-glutamate + CoA + H(+). It functions in the pathway amino-acid biosynthesis; L-arginine biosynthesis; L-ornithine and N-acetyl-L-glutamate from L-glutamate and N(2)-acetyl-L-ornithine (cyclic): step 1/1. Its pathway is amino-acid biosynthesis; L-arginine biosynthesis; N(2)-acetyl-L-ornithine from L-glutamate: step 1/4. Its function is as follows. Catalyzes two activities which are involved in the cyclic version of arginine biosynthesis: the synthesis of N-acetylglutamate from glutamate and acetyl-CoA as the acetyl donor, and of ornithine by transacetylation between N(2)-acetylornithine and glutamate. The sequence is that of Arginine biosynthesis bifunctional protein ArgJ from Chlorobaculum tepidum (strain ATCC 49652 / DSM 12025 / NBRC 103806 / TLS) (Chlorobium tepidum).